Consider the following 2131-residue polypeptide: Sodium channel protein para (2131 aa).

Topologically, residues 1 to 148 (MTEDSDSISE…FNPIRRVAIY (148 aa)) are cytoplasmic. Residues 35–48 (HEKQKELERKRAEG) show a composition bias toward basic and acidic residues. The segment at 35-84 (HEKQKELERKRAEGEVPQYGRKKKQKEIRYDDEDEDEGPQPDPTLEQGVP) is disordered. Over residues 64–73 (YDDEDEDEGP) the composition is skewed to acidic residues. Residues 134–467 (WMLDPFNPIR…AAKAAKLEER (334 aa)) form an I repeat. A helical membrane pass occupies residues 149 to 172 (ILVHPLFSLFIITTILVNCILMIM). Topologically, residues 173 to 180 (PTTPTVES) are extracellular. A helical membrane pass occupies residues 181-199 (TEVIFTGIYTFESAVKVMA). At 200–212 (RGFILCPFTYLRD) the chain is on the cytoplasmic side. A helical membrane pass occupies residues 213–231 (AWNWLDFVVIALAYVTMGI). Residues 232-237 (DLGNLA) are Extracellular-facing. A helical; Voltage-sensor transmembrane segment spans residues 238–257 (ALRTFRVLRALKTVAIVPGL). The Cytoplasmic portion of the chain corresponds to 258–273 (KTIVGAVIESVKNLRD). Residues 274 to 297 (VIILTMFSLSVFALMGLQIYMGVL) traverse the membrane as a helical segment. At 298–373 (TQKCIKKFPL…PNYGYTSFDS (76 aa)) the chain is on the extracellular side. Cysteine 301 and cysteine 350 are oxidised to a cystine. N-linked (GlcNAc...) asparagine glycosylation is found at asparagine 313, asparagine 325, and asparagine 343. Positions 374 to 398 (FGWAFLSAFRLMTQDFWEDLYQLVL) form an intramembrane region, pore-forming. At 399–405 (RAAGPWH) the chain is on the extracellular side. A helical transmembrane segment spans residues 406 to 427 (MLFFIVIIFLGSFYLVNLILAI). Residues 428–812 (VAMSYDELQK…VWLKFQEWVS (385 aa)) are Cytoplasmic-facing. Phosphoserine; by PKA occurs at positions 553 and 570. Disordered regions lie at residues 553–572 (STTS…GSRS) and 671–691 (KESK…TNGG). Positions 680-691 (TRNQSVGATNGG) are enriched in polar residues. The II repeat unit spans residues 799 to 1069 (DCCWVWLKFQ…IAEAFNRIGR (271 aa)). Residues 813 to 837 (LIVFDPFVELFITLCIVVNTMFMAM) traverse the membrane as a helical segment. Over 838–848 (DHHDMNKEMER) the chain is Extracellular. A helical transmembrane segment spans residues 849–873 (VLKSGNYFFTATFAIEATMKLMAMS). Over 874-880 (PKYYFQE) the chain is Cytoplasmic. Residues 881–900 (GWNIFDFIIVALSLLELGLE) traverse the membrane as a helical segment. The Extracellular portion of the chain corresponds to 901-906 (GVQGLS). A helical; Voltage-sensor membrane pass occupies residues 907–926 (VLRSFRLLRVFKLAKSWPTL). The Cytoplasmic portion of the chain corresponds to 927 to 941 (NLLISIMGRTMGALG). The chain crosses the membrane as a helical span at residues 942-963 (NLTFVLCIIIFIFAVMGMQLFG). Over 964–985 (KNYHDHKDRFPDGDLPRWNFTD) the chain is Extracellular. A glycan (N-linked (GlcNAc...) asparagine) is linked at asparagine 982. The pore-forming intramembrane region spans 986–1006 (FMHSFMIVFRVLCGEWIESMW). Residues 1007 to 1013 (DCMYVGD) are Extracellular-facing. An intrachain disulfide couples cysteine 1008 to cysteine 1016. The helical transmembrane segment at 1014 to 1041 (VSCIPFFLATVVIGNLVVLNLFLALLLS) threads the bilayer. Over 1042-1296 (NFGSSSLSAP…WGNLRLKTFQ (255 aa)) the chain is Cytoplasmic. The segment at 1166 to 1240 (DMKNNKPKKS…LDEEGECEEG (75 aa)) is disordered. The segment covering 1177-1194 (YLNNATDDDTASINSYGS) has biased composition (polar residues). Over residues 1199–1225 (PFKDESHKGSAETMEGEEKRDASKEDL) the composition is skewed to basic and acidic residues. The segment covering 1226–1240 (GLDEELDEEGECEEG) has biased composition (acidic residues). The III repeat unit spans residues 1284–1591 (WQGWGNLRLK…QKKYYNAMKK (308 aa)). A helical transmembrane segment spans residues 1297–1320 (LIENKYFETAVITMILMSSLALAL). Topologically, residues 1321-1334 (EDVHLPQRPILQDI) are extracellular. Residues 1335-1359 (LYYMDRIFTVIFFLEMLIKWLALGF) traverse the membrane as a helical segment. Over 1360 to 1365 (KVYFTN) the chain is Cytoplasmic. Residues 1366 to 1387 (AWCWLDFVIVMVSLINFVASLV) form a helical membrane-spanning segment. The Extracellular portion of the chain corresponds to 1388–1391 (GAGG). A helical; Voltage-sensor transmembrane segment spans residues 1392–1413 (IQAFKTMRTLRALRPLRAMSRM). Residues 1414–1432 (QGMRVVVNALVQAIPSIFN) lie on the Cytoplasmic side of the membrane. Residues 1433–1454 (VLLVCLIFWLIFAIMGVQLFAG) form a helical membrane-spanning segment. Topologically, residues 1455–1495 (KYFKCEDMNGTKLSHEIIPNRNACESENYTWVNSAMNFDHV) are extracellular. N-linked (GlcNAc...) asparagine glycosylation is found at asparagine 1463 and asparagine 1482. Residues 1496–1517 (GNAYLCLFQVATFKGWIQIMND) constitute an intramembrane region (pore-forming). Over 1518-1533 (AIDSREVDKQPIRETN) the chain is Extracellular. The helical transmembrane segment at 1534 to 1560 (IYMYLYFVFFIIFGSFFTLNLFIGVII) threads the bilayer. Residues 1561–1614 (DNFNEQKKKAGGSLEMFMTEDQKKYYNAMKKMGSKKPLKAIPRPRWRPQAIVFE) are Cytoplasmic-facing. The stretch at 1601–1862 (IPRPRWRPQA…NMYIAVILEN (262 aa)) is one IV repeat. The helical transmembrane segment at 1615-1638 (IVTDKKFDIIIMLFIGLNMFTMTL) threads the bilayer. The Extracellular portion of the chain corresponds to 1639–1649 (DRYDASDTYNA). Residues 1650–1673 (VLDYLNAIFVVIFSSECLLKIFAL) form a helical membrane-spanning segment. Topologically, residues 1674–1679 (RYHYFI) are cytoplasmic. Residues 1680–1703 (EPWNLFDVVVVILSILGLVLSDII) form a helical membrane-spanning segment. The Extracellular portion of the chain corresponds to 1704–1713 (EKYFVSPTLL). Residues 1714–1735 (RVVRVAKVGRVLRLVKGAKGIR) traverse the membrane as a helical; Voltage-sensor segment. Residues 1736-1750 (TLLFALAMSLPALFN) lie on the Cytoplasmic side of the membrane. Residues 1751–1773 (ICLLLFLVMFIFAIFGMSFFMHV) traverse the membrane as a helical segment. At 1774-1787 (KEKSGINDVYNFKT) the chain is on the extracellular side. The segment at residues 1788 to 1810 (FGQSMILLFQMSTSAGWDGVLDA) is an intramembrane region (pore-forming). Residues 1811–1835 (IINEEACDPPDNDKGYPGNCGSATV) lie on the Extracellular side of the membrane. The helical transmembrane segment at 1836–1860 (GITFLLSYLVISFLIVINMYIAVIL) threads the bilayer. Residues 1861 to 2131 (ENYSQATEDV…PSITSRTADV (271 aa)) are Cytoplasmic-facing. In terms of domain architecture, EF-hand spans 1877-1912 (DDYDMYYEIWQQFDPEGTQYIRYDQLSEFLDVLEPP). Residues 2001–2096 (HKARGEGGGS…GSPGAGSAGR (96 aa)) form a disordered region. Positions 2021–2035 (GDPDAGDPAPDEATD) are enriched in acidic residues. A compositionally biased stretch (low complexity) spans 2068–2088 (AAAAAAAAAAAAAAGTTTAGS).

It belongs to the sodium channel (TC 1.A.1.10) family. Para subfamily.

The protein localises to the cell membrane. Its function is as follows. Mediates the voltage-dependent sodium ion permeability of excitable membranes. Assuming opened or closed conformations in response to the voltage difference across the membrane, the protein forms a sodium-selective channel through which Na(+) ions may pass in accordance with their electrochemical gradient. The polypeptide is Sodium channel protein para (para) (Drosophila melanogaster (Fruit fly)).